Reading from the N-terminus, the 324-residue chain is Glyoxylate/hydroxypyruvate reductase B (324 aa).

Catalysis depends on residues Arg-237 and Glu-266. The Proton donor role is filled by His-285.

The protein belongs to the D-isomer specific 2-hydroxyacid dehydrogenase family. GhrB subfamily. As to quaternary structure, homodimer.

It is found in the cytoplasm. The catalysed reaction is glycolate + NADP(+) = glyoxylate + NADPH + H(+). It carries out the reaction (R)-glycerate + NAD(+) = 3-hydroxypyruvate + NADH + H(+). The enzyme catalyses (R)-glycerate + NADP(+) = 3-hydroxypyruvate + NADPH + H(+). In terms of biological role, catalyzes the NADPH-dependent reduction of glyoxylate and hydroxypyruvate into glycolate and glycerate, respectively. The protein is Glyoxylate/hydroxypyruvate reductase B of Escherichia coli (strain K12 / MC4100 / BW2952).